Reading from the N-terminus, the 326-residue chain is Protein MICROTUBULE BINDING PROTEIN 2C (326 aa).

Polar residues-rich tracts occupy residues 1-15 (MYEQ…QSDS) and 34-46 (PHQS…SGNE). Disordered stretches follow at residues 1 to 46 (MYEQ…SGNE) and 71 to 132 (ERSS…KALA). Positions 132–183 (AGAEKEEMSRLREQVNDLQTKLSEKEEVLKSMEMSKNQVNEIQEKLEATNRL) form a coiled coil.

It belongs to the microtubule binding protein 2C family. As to quaternary structure, interacts with STM. In terms of tissue distribution, expressed in seedlings, roots, flowers and developing ovules.

The protein localises to the cytoplasm. Its subcellular location is the cytoskeleton. In terms of biological role, prevents homeodomain proteins (e.g. STM) association to plasmodesmata and, consequently, cell-to-cell transport. Binds to RNA. Alters STM RNA binding capacity. Regulates cytoskeleton (e.g. actin) organization that determinates cell shape. Regulates stomata patterning and drought tolerance. Involved in restricting tobamovirus (e.g. oilseed rape mosaic virus) infectivity, probably by interfering with cell-to-cell virus movement. The chain is Protein MICROTUBULE BINDING PROTEIN 2C from Arabidopsis thaliana (Mouse-ear cress).